We begin with the raw amino-acid sequence, 178 residues long: Cell division protein ZapC (178 aa).

It belongs to the ZapC family. Interacts directly with FtsZ.

It is found in the cytoplasm. In terms of biological role, contributes to the efficiency of the cell division process by stabilizing the polymeric form of the cell division protein FtsZ. Acts by promoting interactions between FtsZ protofilaments and suppressing the GTPase activity of FtsZ. In Aeromonas hydrophila subsp. hydrophila (strain ATCC 7966 / DSM 30187 / BCRC 13018 / CCUG 14551 / JCM 1027 / KCTC 2358 / NCIMB 9240 / NCTC 8049), this protein is Cell division protein ZapC.